The chain runs to 240 residues: Putative RING finger protein ORF96 (240 aa).

Residues 9–44 (CVVCMEEKPLVVFEPCMHHNCCESCSGHVSNCPYCR) form an RING-type 1 zinc finger. An RING-type 2; degenerate zinc finger spans residues 150–202 (CVICKKEIKEEVGKTYMHACCTATICKPCAKAILKAMVEKEITENLPFCPYCF).

This is Putative RING finger protein ORF96 from Ostreid herpesvirus 1 (isolate France) (OsHV-1).